Consider the following 228-residue polypeptide: uncharacterized protein (228 aa).

This is an uncharacterized protein from Mycobacterium tuberculosis (strain CDC 1551 / Oshkosh).